A 415-amino-acid chain; its full sequence is CCA-adding enzyme (415 aa).

Positions 52 and 55 each coordinate ATP. 2 residues coordinate CTP: S52 and R55. Mg(2+) is bound by residues D64, D66, and D116. ATP is bound by residues H139, K159, and Y168. Residues H139, K159, and Y168 each contribute to the CTP site.

Belongs to the tRNA nucleotidyltransferase/poly(A) polymerase family. Archaeal CCA-adding enzyme subfamily. In terms of assembly, homodimer. Requires Mg(2+) as cofactor.

It catalyses the reaction a tRNA precursor + 2 CTP + ATP = a tRNA with a 3' CCA end + 3 diphosphate. The catalysed reaction is a tRNA with a 3' CCA end + 2 CTP + ATP = a tRNA with a 3' CCACCA end + 3 diphosphate. Functionally, catalyzes the addition and repair of the essential 3'-terminal CCA sequence in tRNAs without using a nucleic acid template. Adds these three nucleotides in the order of C, C, and A to the tRNA nucleotide-73, using CTP and ATP as substrates and producing inorganic pyrophosphate. tRNA 3'-terminal CCA addition is required both for tRNA processing and repair. Also involved in tRNA surveillance by mediating tandem CCA addition to generate a CCACCA at the 3' terminus of unstable tRNAs. While stable tRNAs receive only 3'-terminal CCA, unstable tRNAs are marked with CCACCA and rapidly degraded. In Pyrobaculum neutrophilum (strain DSM 2338 / JCM 9278 / NBRC 100436 / V24Sta) (Thermoproteus neutrophilus), this protein is CCA-adding enzyme.